The chain runs to 461 residues: Argininosuccinate lyase (461 aa).

The protein belongs to the lyase 1 family. Argininosuccinate lyase subfamily.

It localises to the cytoplasm. It catalyses the reaction 2-(N(omega)-L-arginino)succinate = fumarate + L-arginine. It participates in amino-acid biosynthesis; L-arginine biosynthesis; L-arginine from L-ornithine and carbamoyl phosphate: step 3/3. This chain is Argininosuccinate lyase, found in Syntrophotalea carbinolica (strain DSM 2380 / NBRC 103641 / GraBd1) (Pelobacter carbinolicus).